We begin with the raw amino-acid sequence, 728 residues long: Hepatocyte growth factor (728 aa).

Positions 1–32 (MMWGTKLLPVLLLQHVLLHLLLLPVTIPYAEG) are cleaved as a signal peptide. Pyrrolidone carboxylic acid is present on Gln33. Positions 38–124 (NTLHEFKKSA…HEFDLYENKD (87 aa)) constitute a PAN domain. Intrachain disulfides connect Cys71–Cys97, Cys75–Cys85, Cys129–Cys207, Cys150–Cys190, Cys178–Cys202, Cys212–Cys289, Cys233–Cys272, and Cys261–Cys284. Kringle domains follow at residues 129-207 (CIIG…IPQC) and 212-289 (CMTC…IKMC). N-linked (GlcNAc...) asparagine glycosylation occurs at Asn295. 11 cysteine pairs are disulfide-bonded: Cys306/Cys384, Cys327/Cys366, Cys355/Cys378, Cys392/Cys470, Cys413/Cys453, Cys441/Cys465, Cys488/Cys607, Cys520/Cys536, Cys615/Cys682, Cys645/Cys661, and Cys672/Cys700. Kringle domains follow at residues 306–384 (CIKG…IPKC) and 392–470 (CYRG…ISRC). Asn403 is a glycosylation site (N-linked (GlcNAc...) asparagine). The Peptidase S1 domain maps to 496 to 724 (VVNGIPTQTT…YAKWIHKVIL (229 aa)). N-linked (GlcNAc...) asparagine glycosylation is found at Asn569 and Asn656.

It belongs to the peptidase S1 family. Plasminogen subfamily. Dimer of an alpha chain and a beta chain linked by a disulfide bond. Interacts with SRPX2; the interaction increases HGF mitogenic activity. In terms of processing, the single-chain precursor undergoes proteolytic processing by TMPRSS13 resulting in an active two-chain form. The single-chain precursor undergoes proteolytic processing by HGFAC resulting in an active two-chain form.

Functionally, potent mitogen for mature parenchymal hepatocyte cells, seems to be a hepatotrophic factor, and acts as a growth factor for a broad spectrum of tissues and cell types. Activating ligand for the receptor tyrosine kinase MET by binding to it and promoting its dimerization. Activates MAPK signaling following TMPRSS13 cleavage and activation. The chain is Hepatocyte growth factor (Hgf) from Rattus norvegicus (Rat).